We begin with the raw amino-acid sequence, 403 residues long: LIM/homeobox protein Lhx1 (403 aa).

2 consecutive LIM zinc-binding domains span residues 4-54 and 63-117; these read CAGC…CKND and CAGC…CKED. Residues 131–147 show a composition bias toward polar residues; sequence ISVTGSDPSLSPESQDP. Disordered stretches follow at residues 131 to 185 and 318 to 366; these read ISVT…PRTT and PAGT…SMHS. Positions 150–166 are enriched in basic and acidic residues; the sequence is DDAKDSESANVSDKEAG. The segment at residues 179 to 238 is a DNA-binding region (homeobox); it reads RRGPRTTIKAKQLETLKAAFAATPKPTRHIREQLAQETGLNMRVIQVWFQNRRSKERRMK.

In terms of assembly, interacts with ldb1 via the tandem LIM domains. Both LIM domains are required for optimal binding and binding relieves the inhibitory effect of the LIM domains and activates lhx1. Binding to ldb1 also prevents degradation of ldb1 by rnf12. The stoichiometry of lhx1 and ldb1 is important for their function and an excess of ldb1 can inhibit lhx1 function. Interacts with the N-terminal region of rnf12 by a homeobox-dependent mechanism. In terms of tissue distribution, exhibits a biphasic expression pattern. Initially localized to the Spemann organizer region of gastrulae, leading to expression in prechordal mesoderm and notochord. In the second phase, expressed in the lateral mesoderm and neural plate, eventually concentrating in the pronephros and the CNS. Expressed in the pronephros primordium by late gastrula (stage 12.5) and becomes restricted to the tips of the tubules and ducts as kidney development progresses. In the CNS, becomes progressively recognizable in anatomically distinct structures during larval development. Within the forebrain, shows almost identical expression to lhx5 in the diencephalon, being expressed in alternating stripes to lhx2 and lhx9. Expressed in the diencephalic pretectum within prosomere 1, hypothalamus, ventral thalamus and zona limitans intrathalamica. In the telencephalon, the expression pattern is distinct from lhx5, being localized in the pallium and subpallium. Also expressed in the ventral territories of midbrain (mesencephalon) and hindbrain (rhombencephalon), being expressed in the mesencephalic tegmentum and hindbrain reticular formation. Also shows intense expression in the cerebellum including Purkinje cells.

It is found in the nucleus. In terms of biological role, involved in the establishment of the body plan via the Spemann organizer during gastrulation. Transcriptional activator required to induce organizer gene expression downstream of siamois. Promotes head formation by binding to 5'-TAAT'-3' elements in the promoters of head organizer genes cer1 and gsc to stimulate expression. Binds as a complex with siamois and mix-A/mix.1 to the cer1 promoter, and with ldb1 and otx2 to the gsc promoter. Also involved in neural induction via the organizer, including a role in notochord formation. Acts synergistically with ldb1 and ssbp in subsequent axis formation. Involved in kidney development, acting synergistically with pax8 to establish the pronephric primordium in late gastrulae/early neurulae and with pax2 during pronephric morphogenesis in tailbud stages. Has a later role in mediating the activity of inhibitors of ventralization. The polypeptide is LIM/homeobox protein Lhx1 (lhx1) (Xenopus laevis (African clawed frog)).